The primary structure comprises 485 residues: MASSSTVPLGFHYETKYVVLSYLGLLSQEKLQEQHLSSPQGVQLDIASQSLDQEILLKVKTEIEEELKSLDKEISEAFTSTGFDRHTSPVFSPANPESSMEDCLAHLGEKVSQELKEPLHKALQMLLSQPVTYQAFRECTLETTVHASGWNKILVPLVLLRQMLLELTRRGQEPLSALLQFGVTYLEDYSAEYIIQQGGWGTVFSLESEEEEYPGITAEDSNDIYILPSDNSGQVSPPESPTVTTSWQSESLPVSLSASQSWHTESLPVSLGPESWQQIAMDPEEVKSLDSNGAGEKSENNSSNSDIVHVEKEEVPEGMEEAAVASVVLPARELQEALPEAPAPLLPHITATSLLGTREPDTEVITVEKSSPATSLFVELDEEEVKAATTEPTEVEEVVPALEPTETLLSEKEINAREESLVEELSPASEKKPVPPSEGKSRLSPAGEMKPMPLSEGKSILLFGGAAAVAILAVAIGVALALRKK.

A BH4 motif is present at residues 14–30 (ETKYVVLSYLGLLSQEK). A Phosphoserine modification is found at Ser-38. The BH3 motif lies at 100 to 116 (MEDCLAHLGEKVSQELK). A BH1 motif is present at residues 147 to 157 (ASGWNKILVPL). A BH2 motif is present at residues 193 to 206 (YIIQQGGWGTVFSL). Positions 218-248 (AEDSNDIYILPSDNSGQVSPPESPTVTTSWQ) are disordered. Residues 229–248 (SDNSGQVSPPESPTVTTSWQ) are compositionally biased toward polar residues. Residues 246–256 (SWQSESLPVSL) form an A repeat. Phosphoserine is present on residues Ser-259, Ser-261, Ser-303, Ser-326, Ser-371, Ser-375, Ser-410, Ser-420, Ser-426, Ser-429, and Ser-444. The stretch at 261 to 271 (SWHTESLPVSL) is one A; approximate repeat. Residues 418–451 (EESLVEELSPASEKKPVPPSEGKSRLSPAGEMKP) form a disordered region. Residues 425-441 (LSPASEKKPVPPSEGKS) form a B repeat. Residues 443–459 (LSPAGEMKPMPLSEGKS) form a B; approximate repeat. Residues 460–480 (ILLFGGAAAVAILAVAIGVAL) traverse the membrane as a helical segment.

This sequence belongs to the Bcl-2 family. As to quaternary structure, monomer. Ubiquitous, with the highest levels of expression in heart, placenta and pancreas.

It is found in the mitochondrion membrane. Its subcellular location is the nucleus. Its function is as follows. May promote the activation of caspase-3 and apoptosis. The protein is Bcl-2-like protein 13 (BCL2L13) of Homo sapiens (Human).